The sequence spans 98 residues: NADH-ubiquinone oxidoreductase chain 4L (98 aa).

The next 3 membrane-spanning stretches (helical) occupy residues 1–21 (MSLT…GLLL), 29–49 (SLLC…MVIL), and 61–81 (IILL…LVMV).

It belongs to the complex I subunit 4L family. Core subunit of respiratory chain NADH dehydrogenase (Complex I) which is composed of 45 different subunits.

Its subcellular location is the mitochondrion inner membrane. It carries out the reaction a ubiquinone + NADH + 5 H(+)(in) = a ubiquinol + NAD(+) + 4 H(+)(out). Its function is as follows. Core subunit of the mitochondrial membrane respiratory chain NADH dehydrogenase (Complex I) which catalyzes electron transfer from NADH through the respiratory chain, using ubiquinone as an electron acceptor. Part of the enzyme membrane arm which is embedded in the lipid bilayer and involved in proton translocation. The sequence is that of NADH-ubiquinone oxidoreductase chain 4L (MT-ND4L) from Platyrrhinus helleri (Heller's broad-nosed bat).